A 499-amino-acid chain; its full sequence is NAD(P)H-quinone oxidoreductase chain 4, chloroplastic (499 aa).

The next 14 helical transmembrane spans lie at 4 to 24 (LPWL…IPLF), 31 to 51 (MIRW…TYIF), 87 to 107 (IGLI…AWPV), 113 to 130 (LLHF…GLFA), 134 to 154 (ILLF…LLSM), 167 to 187 (FLLY…SMGL), 211 to 231 (ILLY…FPLH), 242 to 262 (HYST…YGLI), 274 to 294 (SLFS…AALT), 305 to 325 (IAYS…SMTY), 330 to 350 (GAIL…FLVG), 386 to 406 (LALP…GVIT), 416 to 436 (IIIT…LLSM), and 462 to 482 (LFIL…PDLV).

It belongs to the complex I subunit 4 family.

It localises to the plastid. The protein localises to the chloroplast thylakoid membrane. It catalyses the reaction a plastoquinone + NADH + (n+1) H(+)(in) = a plastoquinol + NAD(+) + n H(+)(out). It carries out the reaction a plastoquinone + NADPH + (n+1) H(+)(in) = a plastoquinol + NADP(+) + n H(+)(out). The polypeptide is NAD(P)H-quinone oxidoreductase chain 4, chloroplastic (Cryptomeria japonica (Japanese cedar)).